A 331-amino-acid chain; its full sequence is MSTKEKLISHVMKEEPVGSRNKVTVVGVGMVGMASAISILLKDLCDELAMVDVMEDKLKGEVMDLQHGSLFLKTKIVGDKDYSVTANSKVVVVTAGARQQEGESRLNLVQRNVNIFKFIIPNIVKYSPNCILMVVSNPVDILTYVAWKLSGFPRNRVIGSGTNLDSARFRHLIGEKLHLHPSSCHAWIVGEHGDSSVPVWSGVNVAGVSLQGLNPQMGTEGDGENWKAIHKEVVDGAYEVIKLKGYTSWAIGMSVADLVESIIKNMHKVHPVSTLVQGMHGVKDEVFLSVPSVLGNSGLTDVIHMTLKAEEEKQLQKSAETLWGVQKELTL.

NAD(+) contacts are provided by residues 29–57 and Arg-98; that span reads GMVGMASAISILLKDLCDELAMVDVMEDK. Residues Arg-105, Asn-137, and Arg-168 each contribute to the substrate site. Asn-137 provides a ligand contact to NAD(+). Catalysis depends on His-192, which acts as the Proton acceptor. Thr-247 is a substrate binding site.

This sequence belongs to the LDH/MDH superfamily. LDH family. Homotetramer.

The protein resides in the cytoplasm. The catalysed reaction is (S)-lactate + NAD(+) = pyruvate + NADH + H(+). It participates in fermentation; pyruvate fermentation to lactate; (S)-lactate from pyruvate: step 1/1. Interconverts simultaneously and stereospecifically pyruvate and lactate with concomitant interconversion of NADH and NAD(+). The sequence is that of L-lactate dehydrogenase A chain (ldha) from Dissostichus eleginoides (Patagonian toothfish).